Consider the following 211-residue polypeptide: RNA chaperone ProQ (211 aa).

Positions 113–147 (RRAVEKANNPKANKKRSVYHSGNKSENKKSAGKKF) are disordered.

It belongs to the ProQ family.

The protein resides in the cytoplasm. Functionally, RNA chaperone with significant RNA binding, RNA strand exchange and RNA duplexing activities. The chain is RNA chaperone ProQ from Histophilus somni (strain 129Pt) (Haemophilus somnus).